Consider the following 227-residue polypeptide: MICOS complex subunit MIC19 (227 aa).

Gly-2 carries the N-myristoyl glycine lipid modification. A Phosphoserine modification is found at Ser-29. Disordered regions lie at residues 34-61 (DRMKESSPSGSKSQRYSGAYGASVSDEE) and 73-92 (EQAKKESEDQKRLKQAKELD). Polar residues predominate over residues 39-49 (SSPSGSKSQRY). Position 49 is a phosphotyrosine (Tyr-49). Ser-50, Ser-56, and Ser-58 each carry phosphoserine. Position 142 is an N6-acetyllysine (Lys-142). The 43-residue stretch at 180-222 (HPVCADLQAKILQCYRENTHQTLKCSALATQYMHCVNHAKQSM) folds into the CHCH domain. Short sequence motifs (cx9C motif) lie at residues 183-193 (CADLQAKILQC) and 204-214 (CSALATQYMHC). 2 disulfide bridges follow: Cys-183–Cys-214 and Cys-193–Cys-204.

This sequence belongs to the MICOS complex subunit Mic19 family. Metazoan Mic19 subfamily. In terms of assembly, component of the mitochondrial contact site and cristae organizing system (MICOS) complex, composed of at least MICOS10/MIC10, CHCHD3/MIC19, CHCHD6/MIC25, APOOL/MIC27, IMMT/MIC60, APOO/MIC23/MIC26 and MICOS13/MIC13. This complex was also known under the names MINOS or MitOS complex. The MICOS complex associates with mitochondrial outer membrane proteins SAMM50, MTX1 and MTX2 (together described as components of the mitochondrial outer membrane sorting assembly machinery (SAM) complex) and DNAJC11, mitochondrial inner membrane protein TMEM11 and with HSPA9. The MICOS and SAM complexes together with DNAJC11 are part of a large protein complex spanning both membranes termed the mitochondrial intermembrane space bridging (MIB) complex. Interacts with HSPA1A/HSPA1B and OPA1, preferentially with the soluble OPA1 form. Interacts with IMMT/MIC60. (Microbial infection) Interacts with human cytomegalovirus protein UL13; this interaction alters cristae architecture. In terms of tissue distribution, detected at low levels in brain, placenta, lung, liver, kidney and pancreas with increased levels in heart and skeletal muscle. Higher expression in primary lung cancers than in normal lung tissue.

It localises to the mitochondrion inner membrane. Its subcellular location is the cytoplasm. It is found in the nucleus. The protein resides in the mitochondrion. In terms of biological role, component of the MICOS complex, a large protein complex of the mitochondrial inner membrane that plays crucial roles in the maintenance of crista junctions, inner membrane architecture, and formation of contact sites to the outer membrane. Plays an important role in the maintenance of the MICOS complex stability and the mitochondrial cristae morphology. Has also been shown to function as a transcription factor which binds to the BAG1 promoter and represses BAG1 transcription. The protein is MICOS complex subunit MIC19 (CHCHD3) of Homo sapiens (Human).